The following is a 300-amino-acid chain: Hydroxyquinol 1,2-dioxygenase (300 aa).

Residues Tyr-167, Tyr-200, His-224, and His-226 each coordinate Fe cation.

This sequence belongs to the intradiol ring-cleavage dioxygenase family. It depends on Fe(3+) as a cofactor.

It carries out the reaction benzene-1,2,4-triol + O2 = maleylacetate + 2 H(+). It participates in aromatic compound metabolism. It functions in the pathway xenobiotic degradation. Functionally, involved in the degradation of para-nitrophenol (4-NP). Catalyzes the conversion of hydroxyquinol to malelylacetate. In Rhodococcus opacus (Nocardia opaca), this protein is Hydroxyquinol 1,2-dioxygenase (npcC).